The primary structure comprises 305 residues: HPr kinase/phosphorylase (305 aa).

Active-site residues include H138 and K159. 153 to 160 (GESGIGKS) contributes to the ATP binding site. S160 lines the Mg(2+) pocket. Catalysis depends on D177, which acts as the Proton acceptor; for phosphorylation activity. Proton donor; for dephosphorylation activity. The segment at 201–210 (IEIRGIGILD) is important for the catalytic mechanism of both phosphorylation and dephosphorylation. Residue E202 coordinates Mg(2+). Residue R243 is part of the active site. Positions 264–269 (PVRPGR) are important for the catalytic mechanism of dephosphorylation.

It belongs to the HPrK/P family. As to quaternary structure, homohexamer. The cofactor is Mg(2+).

It carries out the reaction [HPr protein]-L-serine + ATP = [HPr protein]-O-phospho-L-serine + ADP + H(+). It catalyses the reaction [HPr protein]-O-phospho-L-serine + phosphate + H(+) = [HPr protein]-L-serine + diphosphate. Catalyzes the ATP- as well as the pyrophosphate-dependent phosphorylation of a specific serine residue in HPr, a phosphocarrier protein of the phosphoenolpyruvate-dependent sugar phosphotransferase system (PTS). HprK/P also catalyzes the pyrophosphate-producing, inorganic phosphate-dependent dephosphorylation (phosphorolysis) of seryl-phosphorylated HPr (P-Ser-HPr). The two antagonistic activities of HprK/P are regulated by several intracellular metabolites, which change their concentration in response to the absence or presence of rapidly metabolisable carbon sources (glucose, fructose, etc.) in the growth medium. Therefore, by controlling the phosphorylation state of HPr, HPrK/P is a sensor enzyme that plays a major role in the regulation of carbon metabolism and sugar transport: it mediates carbon catabolite repression (CCR), and regulates PTS-catalyzed carbohydrate uptake and inducer exclusion. In Thermoanaerobacter pseudethanolicus (strain ATCC 33223 / 39E) (Clostridium thermohydrosulfuricum), this protein is HPr kinase/phosphorylase.